We begin with the raw amino-acid sequence, 410 residues long: Peptidase T (410 aa).

His-79 is a binding site for Zn(2+). Asp-81 is an active-site residue. Asp-142 is a binding site for Zn(2+). Catalysis depends on Glu-176, which acts as the Proton acceptor. 3 residues coordinate Zn(2+): Glu-177, Asp-199, and His-381.

The protein belongs to the peptidase M20B family. The cofactor is Zn(2+).

The protein resides in the cytoplasm. It catalyses the reaction Release of the N-terminal residue from a tripeptide.. Its function is as follows. Cleaves the N-terminal amino acid of tripeptides. The protein is Peptidase T of Bacillus mycoides (strain KBAB4) (Bacillus weihenstephanensis).